The primary structure comprises 78 residues: Small ribosomal subunit protein bS20 (78 aa).

The protein belongs to the bacterial ribosomal protein bS20 family.

Its function is as follows. Binds directly to 16S ribosomal RNA. This chain is Small ribosomal subunit protein bS20, found in Streptococcus pneumoniae serotype 2 (strain D39 / NCTC 7466).